A 266-amino-acid polypeptide reads, in one-letter code: GTP cyclohydrolase III (266 aa).

It belongs to the archaeal-type GTP cyclohydrolase family.

The catalysed reaction is GTP + 3 H2O = 2-amino-5-formylamino-6-(5-phospho-D-ribosylamino)pyrimidin-4(3H)-one + 2 phosphate + 2 H(+). Functionally, catalyzes the formation of 2-amino-5-formylamino-6-ribofuranosylamino-4(3H)-pyrimidinone ribonucleotide monophosphate and inorganic phosphate from GTP. Also has an independent pyrophosphate phosphohydrolase activity. This Methanococcus vannielii (strain ATCC 35089 / DSM 1224 / JCM 13029 / OCM 148 / SB) protein is GTP cyclohydrolase III.